Reading from the N-terminus, the 126-residue chain is Fatty acid-binding protein, liver (126 aa).

Ala2 is modified (N-acetylalanine).

Belongs to the calycin superfamily. Fatty-acid binding protein (FABP) family. As to expression, liver.

Its subcellular location is the cytoplasm. Its function is as follows. Binds free fatty acids and their coenzyme A derivatives, bilirubin, and some other small molecules in the cytoplasm. May be involved in intracellular lipid transport this L-FABP binds only one fatty acid/molecule. Has more affinity for trans-parinaric acid than for cis-parinaric acid. This chain is Fatty acid-binding protein, liver (fabp1), found in Rhamdia sapo (South American catfish).